The sequence spans 314 residues: tRNA dimethylallyltransferase (314 aa).

16 to 23 (GPTGVGKT) is a binding site for ATP. 18 to 23 (TGVGKT) contacts substrate. Positions 41–44 (DSMQ) are interaction with substrate tRNA.

It belongs to the IPP transferase family. As to quaternary structure, monomer. It depends on Mg(2+) as a cofactor.

It catalyses the reaction adenosine(37) in tRNA + dimethylallyl diphosphate = N(6)-dimethylallyladenosine(37) in tRNA + diphosphate. Functionally, catalyzes the transfer of a dimethylallyl group onto the adenine at position 37 in tRNAs that read codons beginning with uridine, leading to the formation of N6-(dimethylallyl)adenosine (i(6)A). This is tRNA dimethylallyltransferase from Desulfosudis oleivorans (strain DSM 6200 / JCM 39069 / Hxd3) (Desulfococcus oleovorans).